We begin with the raw amino-acid sequence, 224 residues long: Claudin-19 (224 aa).

At 1-7 the chain is on the cytoplasmic side; sequence MANSGLQ. Residues 8–28 form a helical membrane-spanning segment; it reads LLGYFLALGGWVGIIASTALP. Over 29-81 the chain is Extracellular; that stretch reads QWKQSSYAGDAIITAVGLYEGLWMSCASQSTGQVQCKLYDSLLALDGHIQSAR. Cys-54 and Cys-64 form a disulfide bridge. Residues 82-102 form a helical membrane-spanning segment; sequence ALMVVAVLLGFVAMVLSVVGM. At 103-117 the chain is on the cytoplasmic side; the sequence is KCTRVGDSNPTAKSR. A helical transmembrane segment spans residues 118 to 138; that stretch reads VAISGGALFLLAGLCTLTAVS. Over 139–160 the chain is Extracellular; that stretch reads WYATLVTQEFFNPSTPVNARYE. The chain crosses the membrane as a helical span at residues 161–181; the sequence is FGPALFVGWASAGLAMLGGSF. The Cytoplasmic portion of the chain corresponds to 182–224; the sequence is LCCTCPEPERANSIPQPYRSGPSTAAREPVVKLPASVKGPLGV.

It belongs to the claudin family. Can form homo- and heteropolymeric tight junction strands. Interacts with other claudins including CLDN3, CLDN10, CLDN16 and CLDN18 with highest affinity for CLDN16. Interacts (via PDZ-binding motif TRV) with TJP1 (via PDZ domain). In terms of assembly, (Microbial infection) Interacts (via both extracellular domains) with Clostridium perfringens enterotoxin CPE; the interaction disrupts claudin assembly in tight junctions. As to expression, expressed in the corticomedullary axis of the TAL, specifically in the cortex and the outer stripe of outer medulla (OSOM) zone (at protein level). Expressed in peripheral nervous system, in Schwan cells (at protein level).

The protein localises to the cell junction. The protein resides in the tight junction. It localises to the cell membrane. The enzyme catalyses Mg(2+)(in) = Mg(2+)(out). The catalysed reaction is Ca(2+)(in) = Ca(2+)(out). It carries out the reaction Na(+)(in) = Na(+)(out). It catalyses the reaction K(+)(in) = K(+)(out). The enzyme catalyses Rb(+)(in) = Rb(+)(out). The catalysed reaction is Cs(+)(in) = Cs(+)(out). It carries out the reaction Li(+)(in) = Li(+)(out). Forms paracellular channels: coassembles with CLDN16 into tight junction strands with cation-selective channels through the strands, conveying epithelial permeability in a process known as paracellular tight junction permeability. Involved in the maintenance of ion gradients along the nephron. In the thick ascending limb (TAL) of Henle's loop, facilitates sodium paracellular permeability from the interstitial compartment to the lumen, contributing to the lumen-positive transepithelial potential that drives paracellular magnesium and calcium reabsorption. Forms paracellular barriers on its own. In the peripheral nervous system, represents a major constituent of the tight junctions in Schwann cells and contributes to electrical sealing. During retinal neurogenesis, may regulate the barrier properties of tight junctions in retinal pigment epithelium, required for proper retinal tissue differentiation and vision. The chain is Claudin-19 from Mus musculus (Mouse).